The following is a 344-amino-acid chain: Probable aldo-keto reductase 1 (344 aa).

Y63 functions as the Proton donor in the catalytic mechanism. H130 contributes to the substrate binding site. Residue 209–219 participates in NADP(+) binding; that stretch reads SPLGLGFFAAG.

Belongs to the aldo/keto reductase family.

This chain is Probable aldo-keto reductase 1, found in Arabidopsis thaliana (Mouse-ear cress).